The sequence spans 1373 residues: DNA-directed RNA polymerase subunit beta'' (1373 aa).

Zn(2+) is bound by residues Cys-220, Cys-291, Cys-298, and Cys-301.

This sequence belongs to the RNA polymerase beta' chain family. RpoC2 subfamily. In plastids the minimal PEP RNA polymerase catalytic core is composed of four subunits: alpha, beta, beta', and beta''. When a (nuclear-encoded) sigma factor is associated with the core the holoenzyme is formed, which can initiate transcription. It depends on Zn(2+) as a cofactor.

It is found in the plastid. It localises to the chloroplast. It carries out the reaction RNA(n) + a ribonucleoside 5'-triphosphate = RNA(n+1) + diphosphate. In terms of biological role, DNA-dependent RNA polymerase catalyzes the transcription of DNA into RNA using the four ribonucleoside triphosphates as substrates. In Silene latifolia (White campion), this protein is DNA-directed RNA polymerase subunit beta''.